The chain runs to 162 residues: B-box zinc finger protein 23 (162 aa).

8 residues coordinate Zn(2+): Cys-5, Cys-8, Cys-28, His-33, Cys-63, Cys-66, Cys-86, and His-91. The B box-type 1; atypical zinc-finger motif lies at 5 to 47 (CEVCEKAEAEVLCCSDEAVLCKPCDIKVHEANKLFQRHHRVAL). The segment at 63–101 (CDICQERKGYFFCLEDRAMLCNDCDEAIHTCNSHQRFLL) adopts a B box-type 2; atypical zinc-finger fold. The tract at residues 137–162 (QYSSEETEAGNSGEIVHKNPSVILSP) is disordered.

The protein resides in the nucleus. Functionally, probable transcription factor that may be involved in seedling photomorphogenesis. The chain is B-box zinc finger protein 23 from Arabidopsis thaliana (Mouse-ear cress).